The primary structure comprises 448 residues: MAKKPIYKSLYFQVIVAIIAGILVGHFYPSTTHVVDGVKEHIPGLGEQLKPLGDAFIRLIKMIIAPVIFCTVVSGIAGMESMKSVGKTGGVALLYFEVVSTIALLIGLLVINIAKPGVGMNVDPASLDTSGIAKYVASGQSQSTIEFLMHIIPETVVGAFANGEILQVLLFAIMFGFALHKLGDAGRPVLKFIDQISHVFFNIVNMIMKLAPIGAFGAMAFTIGKYGVGSLVQLGQLIICFYVTCLLFIFIVLGTISRICGFSILKMIRLIREELLIVLGTSSSESVLPRMLRKLEIAGCEKSVVGLVIPTGYSFNLDGTSIYLTMAAIFIAQATNTQLDVQHQITLLLVLLISSKGAAGVTGSGFIVMAATLSAVGHIPVAGLALILGIDRFMSEARALTNLTGNTLATIAVAKWVGALDKEKLDEALNNPAEVDRKMLEADRPAHA.

The next 9 helical transmembrane spans lie at 9-29, 59-79, 91-111, 159-179, 203-223, 237-257, 312-332, 345-365, and 367-387; these read SLYFQVIVAIIAGILVGHFYP, LIKMIIAPVIFCTVVSGIAGM, VALLYFEVVSTIALLIGLLVI, AFANGEILQVLLFAIMFGFAL, IVNMIMKLAPIGAFGAMAFTI, LIICFYVTCLLFIFIVLGTIS, GYSFNLDGTSIYLTMAAIFIA, ITLLLVLLISSKGAAGVTGSG, and IVMAATLSAVGHIPVAGLALI.

It belongs to the dicarboxylate/amino acid:cation symporter (DAACS) (TC 2.A.23) family.

Its subcellular location is the cell inner membrane. Its function is as follows. Responsible for the transport of dicarboxylates such as succinate, fumarate, and malate from the periplasm across the membrane. This Acinetobacter baylyi (strain ATCC 33305 / BD413 / ADP1) protein is C4-dicarboxylate transport protein.